The primary structure comprises 173 residues: Putative C-type lectin protein FPV198 (173 aa).

Residues 50 to 169 (GMSGWVQINN…CNKKHTGICF (120 aa)) form the C-type lectin domain.

The protein is Putative C-type lectin protein FPV198 of Vertebrata (FPV).